The chain runs to 105 residues: Met repressor (105 aa).

It belongs to the MetJ family. Homodimer.

It localises to the cytoplasm. This regulatory protein, when combined with SAM (S-adenosylmethionine) represses the expression of the methionine regulon and of enzymes involved in SAM synthesis. The chain is Met repressor from Pectobacterium carotovorum subsp. carotovorum (strain PC1).